A 572-amino-acid chain; its full sequence is Periplasmic pectate lyase (572 aa).

An N-terminal signal peptide occupies residues 1 to 23 (MKKRALLLSMSVLAMLYIPAGQA).

Belongs to the polysaccharide lyase 2 family.

The protein localises to the periplasm. The catalysed reaction is Eliminative cleavage of (1-&gt;4)-alpha-D-galacturonan to give oligosaccharides with 4-deoxy-alpha-D-galact-4-enuronosyl groups at their non-reducing ends.. Its pathway is glycan metabolism; pectin degradation; 2-dehydro-3-deoxy-D-gluconate from pectin: step 2/5. This chain is Periplasmic pectate lyase (pelY), found in Yersinia pseudotuberculosis serotype I (strain IP32953).